The following is a 517-amino-acid chain: MACSGCSCEAAVGAMASEAYLEGAPVREARELVAELCRHFYAQGWVTGTGGSITVKVNDPTVPLADRLIVMSPSGVQKERMVAEDMYVMAADGKVLSAPVAKPWPNKPPKCTDCAPLFMKAYLMRGAGAVIHSHGIETCIATMLIPGAKEFRVTHMEMIKGIKGHGYHDELVIPIIENTPYEYELTDSLSEAIAAYPKATAVLVRNHGIYVWGESWINAKTQAECYHYLLDACIKLYQLGIDWTTPEHGSINNPRRPHSILSPEICNGCHAADSSKCVVLDIEGTTTPISFVTDVMFPYARDNVRKHLTSTFDFEETKEDIKLLRIQIEDDLQNGVAGAVPVPPDEGGKEEVINSLVANVESMIKADRKITSLKQLQGHIWRIGFQKKELQGVVFEDVPVALKNWHASGIKVYIYSSGSREAQRLLFGNTTYGDLRKFLCGYFDTTTGNKRETRSYFEISQSLGVDSPSQILFITDVFQEAIAAKNAGFEVIISIRPGNAPLPDNHGFRTIKSFSEI.

The tract at residues 1–242 (MACSGCSCEA…CIKLYQLGID (242 aa)) is methylthioribulose-1-phosphate dehydratase. Cys-114 lines the substrate pocket. The Zn(2+) site is built by His-132 and His-134. Residue Glu-157 is the Proton donor/acceptor; for methylthioribulose-1-phosphate dehydratase activity of the active site. His-207 provides a ligand contact to Zn(2+). The segment at 278 to 517 (VVLDIEGTTT…FRTIKSFSEI (240 aa)) is enolase-phosphatase E1. The Mg(2+) site is built by Asp-281 and Glu-283. Residues 416 to 417 (SS) and Lys-450 contribute to the substrate site. Asp-476 contributes to the Mg(2+) binding site.

This sequence in the N-terminal section; belongs to the aldolase class II family. MtnB subfamily. It in the C-terminal section; belongs to the HAD-like hydrolase superfamily. MasA/MtnC family. The cofactor is Zn(2+). Requires Mg(2+) as cofactor.

The catalysed reaction is 5-(methylsulfanyl)-D-ribulose 1-phosphate = 5-methylsulfanyl-2,3-dioxopentyl phosphate + H2O. It catalyses the reaction 5-methylsulfanyl-2,3-dioxopentyl phosphate + H2O = 1,2-dihydroxy-5-(methylsulfanyl)pent-1-en-3-one + phosphate. The protein operates within amino-acid biosynthesis; L-methionine biosynthesis via salvage pathway; L-methionine from S-methyl-5-thio-alpha-D-ribose 1-phosphate: step 2/6. Its pathway is amino-acid biosynthesis; L-methionine biosynthesis via salvage pathway; L-methionine from S-methyl-5-thio-alpha-D-ribose 1-phosphate: step 3/6. It functions in the pathway amino-acid biosynthesis; L-methionine biosynthesis via salvage pathway; L-methionine from S-methyl-5-thio-alpha-D-ribose 1-phosphate: step 4/6. The polypeptide is Probable bifunctional methylthioribulose-1-phosphate dehydratase/enolase-phosphatase E1 (Zea mays (Maize)).